A 211-amino-acid chain; its full sequence is Transcription antitermination protein NusB (211 aa).

Belongs to the NusB family.

Involved in transcription antitermination. Required for transcription of ribosomal RNA (rRNA) genes. Binds specifically to the boxA antiterminator sequence of the ribosomal RNA (rrn) operons. The sequence is that of Transcription antitermination protein NusB from Gloeobacter violaceus (strain ATCC 29082 / PCC 7421).